The primary structure comprises 219 residues: uncharacterized protein (219 aa).

The N-terminal stretch at 1–26 (MNDRGVPNSRTGPSLLALLPAANSYA) is a signal peptide. Disordered stretches follow at residues 36–57 (AVGV…TRGG) and 88–219 (SGLG…GLCE). Residues 127-173 (LSPPSALGSSPAGRGRPAPAIAAAKSSPLSASAAPGRCGARPRAPSR) show a composition bias toward low complexity. The span at 176–202 (RERRPRGNPRAPLRRGARGRRRSHTRG) shows a compositional bias: basic residues.

This is an uncharacterized protein from Gallid herpesvirus 2 (strain Chicken/Md5/ATCC VR-987) (GaHV-2).